The following is a 306-amino-acid chain: MIFQRTVKEMVKTTGVGLHSGNKVTLTIKPAPVNTGIKLVRTDLSPAVEIPAVADQVRETTMCTALVNDDGVRISTIEHLFAALAGLGIDNAVIEVDAPEIPIMDGSASPFVFLLQSVGIQEQSAAKKYIKITKPIRVEDGDKWAELKPFKGFRVDFAIDFNHPEIARSQQHMVMDFSSSAFIKDISRARTFGFMRDIEYLRANNLALGGSMENAVVLDEYRVLNPDGLRYEDEFVKHKILDAFGDLYVAGHAIVGEFCAFKTGHALNNQLVRAMLAQQDAWEIVSFEKEADAPVSFSVPAGAVFA.

Zn(2+) contacts are provided by histidine 79, histidine 238, and aspartate 242. Histidine 265 functions as the Proton donor in the catalytic mechanism.

This sequence belongs to the LpxC family. Zn(2+) is required as a cofactor.

It carries out the reaction a UDP-3-O-[(3R)-3-hydroxyacyl]-N-acetyl-alpha-D-glucosamine + H2O = a UDP-3-O-[(3R)-3-hydroxyacyl]-alpha-D-glucosamine + acetate. It functions in the pathway glycolipid biosynthesis; lipid IV(A) biosynthesis; lipid IV(A) from (3R)-3-hydroxytetradecanoyl-[acyl-carrier-protein] and UDP-N-acetyl-alpha-D-glucosamine: step 2/6. In terms of biological role, catalyzes the hydrolysis of UDP-3-O-myristoyl-N-acetylglucosamine to form UDP-3-O-myristoylglucosamine and acetate, the committed step in lipid A biosynthesis. This is UDP-3-O-acyl-N-acetylglucosamine deacetylase from Shewanella halifaxensis (strain HAW-EB4).